We begin with the raw amino-acid sequence, 232 residues long: A-type ATP synthase subunit D (232 aa).

Positions lysine 200–aspartate 232 are disordered. Residues glutamate 209–aspartate 222 show a composition bias toward acidic residues.

This sequence belongs to the V-ATPase D subunit family. Has multiple subunits with at least A(3), B(3), C, D, E, F, H, I and proteolipid K(x).

The protein resides in the cell membrane. Component of the A-type ATP synthase that produces ATP from ADP in the presence of a proton gradient across the membrane. The sequence is that of A-type ATP synthase subunit D from Haloquadratum walsbyi (strain DSM 16790 / HBSQ001).